The following is a 141-amino-acid chain: ATP synthase epsilon chain (141 aa).

The protein belongs to the ATPase epsilon chain family. F-type ATPases have 2 components, CF(1) - the catalytic core - and CF(0) - the membrane proton channel. CF(1) has five subunits: alpha(3), beta(3), gamma(1), delta(1), epsilon(1). CF(0) has three main subunits: a, b and c.

Its subcellular location is the cell membrane. Produces ATP from ADP in the presence of a proton gradient across the membrane. This chain is ATP synthase epsilon chain, found in Natranaerobius thermophilus (strain ATCC BAA-1301 / DSM 18059 / JW/NM-WN-LF).